The chain runs to 308 residues: tRNA pseudouridine synthase B (308 aa).

The active-site Nucleophile is the aspartate 47.

It belongs to the pseudouridine synthase TruB family. Type 1 subfamily.

It carries out the reaction uridine(55) in tRNA = pseudouridine(55) in tRNA. Responsible for synthesis of pseudouridine from uracil-55 in the psi GC loop of transfer RNAs. This Xanthomonas campestris pv. campestris (strain B100) protein is tRNA pseudouridine synthase B.